Reading from the N-terminus, the 313-residue chain is Ribosomal RNA small subunit methyltransferase H (313 aa).

S-adenosyl-L-methionine is bound by residues 31 to 33 (GGH), Asp-51, Phe-77, Asp-95, and Gln-102.

This sequence belongs to the methyltransferase superfamily. RsmH family.

The protein resides in the cytoplasm. The catalysed reaction is cytidine(1402) in 16S rRNA + S-adenosyl-L-methionine = N(4)-methylcytidine(1402) in 16S rRNA + S-adenosyl-L-homocysteine + H(+). Its function is as follows. Specifically methylates the N4 position of cytidine in position 1402 (C1402) of 16S rRNA. This Xylella fastidiosa (strain M23) protein is Ribosomal RNA small subunit methyltransferase H.